Consider the following 495-residue polypeptide: Cytochrome P450 710A1 (495 aa).

Residues 5-25 form a helical membrane-spanning segment; sequence VSIFASLAPYLISAFLLFLLV. A heme-binding site is contributed by cysteine 434.

This sequence belongs to the cytochrome P450 family. Heme serves as cofactor. Expressed in the vascular tissues of roots, shoots and leaves. Expressed in root tips and sepals. Very low expression in stems and siliques.

The protein localises to the membrane. The catalysed reaction is 5-dehydroepisterol + NADPH + O2 + H(+) = ergosta-5,7,22,24(28)-tetraen-3beta-ol + NADP(+) + 2 H2O. It participates in steroid biosynthesis; sterol biosynthesis. Required to form the C-22 double bond in the sterol side chain. Possesses in vitro C-22 desaturase activity toward beta-sitosterol and produces stigmasterol. No activity with campesterol. This chain is Cytochrome P450 710A1, found in Arabidopsis thaliana (Mouse-ear cress).